The primary structure comprises 143 residues: Ribonuclease H (143 aa).

An RNase H type-1 domain is found at 1–136; that stretch reads MQEIEIFCDG…CDSLAKLEAQ (136 aa). The Mg(2+) site is built by Asp9, Glu47, Asp69, and Asp128.

Belongs to the RNase H family. In terms of assembly, monomer. The cofactor is Mg(2+).

It localises to the cytoplasm. The catalysed reaction is Endonucleolytic cleavage to 5'-phosphomonoester.. In terms of biological role, endonuclease that specifically degrades the RNA of RNA-DNA hybrids. This is Ribonuclease H from Helicobacter acinonychis (strain Sheeba).